A 499-amino-acid chain; its full sequence is Serine carboxypeptidase-like 34 (499 aa).

The signal sequence occupies residues 1–25; that stretch reads MGSHSVEFSVLVLFLVSFLLGSTSA. Residues Asn73, Asn124, and Asn158 are each glycosylated (N-linked (GlcNAc...) asparagine). 3 disulfide bridges follow: Cys106–Cys383, Cys269–Cys280, and Cys304–Cys351. The active site involves Ser200. 3 N-linked (GlcNAc...) asparagine glycosylation sites follow: Asn310, Asn372, and Asn375. Catalysis depends on residues Asp419 and His471.

It belongs to the peptidase S10 family. As to expression, ubiquitous.

The protein resides in the secreted. Its function is as follows. Probable carboxypeptidase. This is Serine carboxypeptidase-like 34 (SCPL34) from Arabidopsis thaliana (Mouse-ear cress).